The sequence spans 1179 residues: Pesticidal crystal protein Cry1Ad (1179 aa).

Belongs to the delta endotoxin family.

Promotes colloidosmotic lysis by binding to the midgut epithelial cells of many lepidopteran larvae. In Bacillus thuringiensis subsp. aizawai, this protein is Pesticidal crystal protein Cry1Ad (cry1Ad).